The following is a 146-amino-acid chain: Arginine repressor (146 aa).

Belongs to the ArgR family.

Its subcellular location is the cytoplasm. It participates in amino-acid biosynthesis; L-arginine biosynthesis [regulation]. Its function is as follows. Regulates arginine biosynthesis genes. In Parabacteroides distasonis (strain ATCC 8503 / DSM 20701 / CIP 104284 / JCM 5825 / NCTC 11152), this protein is Arginine repressor.